A 508-amino-acid chain; its full sequence is Chromosomal replication initiator protein DnaA (508 aa).

The domain I, interacts with DnaA modulators stretch occupies residues 1-90 (MSVELWQQCV…RRSSAPRAAP (90 aa)). The segment at 91–171 (NAPVSAAVAA…QVEGALKHTS (81 aa)) is domain II. The disordered stretch occupies residues 130–160 (EVEEPSSRDSFDSMSDSGSVPAASGRTEQRT). Positions 172–388 (YLNRTFTFET…GALKRVIAHS (217 aa)) are domain III, AAA+ region. 4 residues coordinate ATP: G216, G218, K219, and T220. Residues 389–508 (HFMGRDITIE…YKNLLRTLTT (120 aa)) are domain IV, binds dsDNA.

It belongs to the DnaA family. As to quaternary structure, oligomerizes as a right-handed, spiral filament on DNA at oriC.

Its subcellular location is the cytoplasm. Its function is as follows. Plays an essential role in the initiation and regulation of chromosomal replication. ATP-DnaA binds to the origin of replication (oriC) to initiate formation of the DNA replication initiation complex once per cell cycle. Binds the DnaA box (a 9 base pair repeat at the origin) and separates the double-stranded (ds)DNA. Forms a right-handed helical filament on oriC DNA; dsDNA binds to the exterior of the filament while single-stranded (ss)DNA is stabiized in the filament's interior. The ATP-DnaA-oriC complex binds and stabilizes one strand of the AT-rich DNA unwinding element (DUE), permitting loading of DNA polymerase. After initiation quickly degrades to an ADP-DnaA complex that is not apt for DNA replication. Binds acidic phospholipids. The polypeptide is Chromosomal replication initiator protein DnaA (Pseudomonas entomophila (strain L48)).